The sequence spans 93 residues: Aspartyl/glutamyl-tRNA(Asn/Gln) amidotransferase subunit C (93 aa).

The protein belongs to the GatC family. Heterotrimer of A, B and C subunits.

The enzyme catalyses L-glutamyl-tRNA(Gln) + L-glutamine + ATP + H2O = L-glutaminyl-tRNA(Gln) + L-glutamate + ADP + phosphate + H(+). It catalyses the reaction L-aspartyl-tRNA(Asn) + L-glutamine + ATP + H2O = L-asparaginyl-tRNA(Asn) + L-glutamate + ADP + phosphate + 2 H(+). Functionally, allows the formation of correctly charged Asn-tRNA(Asn) or Gln-tRNA(Gln) through the transamidation of misacylated Asp-tRNA(Asn) or Glu-tRNA(Gln) in organisms which lack either or both of asparaginyl-tRNA or glutaminyl-tRNA synthetases. The reaction takes place in the presence of glutamine and ATP through an activated phospho-Asp-tRNA(Asn) or phospho-Glu-tRNA(Gln). This chain is Aspartyl/glutamyl-tRNA(Asn/Gln) amidotransferase subunit C, found in Helicobacter pylori (strain HPAG1).